The chain runs to 116 residues: Large ribosomal subunit protein bL20 (116 aa).

The protein belongs to the bacterial ribosomal protein bL20 family.

Binds directly to 23S ribosomal RNA and is necessary for the in vitro assembly process of the 50S ribosomal subunit. It is not involved in the protein synthesizing functions of that subunit. In Bacteroides fragilis (strain ATCC 25285 / DSM 2151 / CCUG 4856 / JCM 11019 / LMG 10263 / NCTC 9343 / Onslow / VPI 2553 / EN-2), this protein is Large ribosomal subunit protein bL20.